The following is a 438-amino-acid chain: MAAGLRKRGRSGSAAQAEGLCKQWLQRAWQERRLLLREPRYTLLVAACLCLAEVGITFWVIHRVAYTEIDWKAYMAEVEGVINGTYDYTQLQGDTGPLVYPAGFVYIFMGLYYATSRGTDIRMAQNIFAVLYLATLLLVFLIYHQTCKVPPFVFFFMCCASYRVHSIFVLRLFNDPVAMVLLFLSINLLLAQRWGWGCCFFSLAVSVKMNVLLFAPGLLFLLLTQFGFRGALPKLGICAGLQVVLGLPFLLENPSGYLSRSFDLGRQFLFHWTVNWRFLPEALFLHRAFHLALLTAHLTLLLLFALCRWHRTGESILSLLRDPSKRKVPPQPLTPNQIVSTLFTSNFIGICFSRSLHYQFYVWYFHTLPYLLWAMPARWLTHLLRLLVLGLIELSWNTYPSTSCSSAALHICHAVILLQLWLGPQPFPKSTQHSKKAH.

S13 is subject to Phosphoserine. The next 11 membrane-spanning stretches (helical) occupy residues Y41–I61, T95–T115, M123–Y143, V149–V169, L172–Q192, L203–L223, A231–L251, F289–W309, P332–F352, L356–P376, and A407–F427.

It belongs to the glycosyltransferase ALG3 family.

The protein localises to the endoplasmic reticulum membrane. The enzyme catalyses an alpha-D-Man-(1-&gt;2)-alpha-D-Man-(1-&gt;2)-alpha-D-Man-(1-&gt;3)-[alpha-D-Man-(1-&gt;6)]-beta-D-Man-(1-&gt;4)-beta-D-GlcNAc-(1-&gt;4)-alpha-D-GlcNAc-diphospho-di-trans,poly-cis-dolichol + a di-trans,poly-cis-dolichyl beta-D-mannosyl phosphate = an alpha-D-Man-(1-&gt;2)-alpha-D-Man-(1-&gt;2)-alpha-D-Man-(1-&gt;3)-[alpha-D-Man-(1-&gt;3)-alpha-D-Man-(1-&gt;6)]-beta-D-Man-(1-&gt;4)-beta-D-GlcNAc-(1-&gt;4)-alpha-D-GlcNAc-diphospho-di-trans,poly-cis-dolichol + a di-trans,poly-cis-dolichyl phosphate + H(+). The protein operates within protein modification; protein glycosylation. Functionally, dol-P-Man:Man(5)GlcNAc(2)-PP-Dol alpha-1,3-mannosyltransferase that operates in the biosynthetic pathway of dolichol-linked oligosaccharides, the glycan precursors employed in protein asparagine (N)-glycosylation. The assembly of dolichol-linked oligosaccharides begins on the cytosolic side of the endoplasmic reticulum membrane and finishes in its lumen. The sequential addition of sugars to dolichol pyrophosphate produces dolichol-linked oligosaccharides containing fourteen sugars, including two GlcNAcs, nine mannoses and three glucoses. Once assembled, the oligosaccharide is transferred from the lipid to nascent proteins by oligosaccharyltransferases. In the lumen of the endoplasmic reticulum, adds the first dolichyl beta-D-mannosyl phosphate derived mannose in an alpha-1,3 linkage to Man(5)GlcNAc(2)-PP-dolichol to produce Man(6)GlcNAc(2)-PP-dolichol. Man(6)GlcNAc(2)-PP-dolichol is a substrate for ALG9, the following enzyme in the biosynthetic pathway. The polypeptide is Dol-P-Man:Man(5)GlcNAc(2)-PP-Dol alpha-1,3-mannosyltransferase (Homo sapiens (Human)).